A 407-amino-acid polypeptide reads, in one-letter code: Argininosuccinate synthase (407 aa).

ATP-binding positions include 11–19 (AYSGGLDTS) and alanine 38. Tyrosine 89 and serine 94 together coordinate L-citrulline. An ATP-binding site is contributed by glycine 119. Threonine 121, asparagine 125, and aspartate 126 together coordinate L-aspartate. Asparagine 125 is an L-citrulline binding site. 5 residues coordinate L-citrulline: arginine 129, serine 180, serine 189, glutamate 265, and tyrosine 277.

The protein belongs to the argininosuccinate synthase family. Type 1 subfamily. In terms of assembly, homotetramer.

It is found in the cytoplasm. The enzyme catalyses L-citrulline + L-aspartate + ATP = 2-(N(omega)-L-arginino)succinate + AMP + diphosphate + H(+). The protein operates within amino-acid biosynthesis; L-arginine biosynthesis; L-arginine from L-ornithine and carbamoyl phosphate: step 2/3. The protein is Argininosuccinate synthase of Magnetococcus marinus (strain ATCC BAA-1437 / JCM 17883 / MC-1).